The sequence spans 238 residues: Ribosomal RNA small subunit methyltransferase G (238 aa).

Residues Gly77, Phe82, 128–129, and Arg147 each bind S-adenosyl-L-methionine; that span reads AE.

It belongs to the methyltransferase superfamily. RNA methyltransferase RsmG family.

The protein resides in the cytoplasm. Specifically methylates the N7 position of guanine in position 535 of 16S rRNA. This Listeria monocytogenes serotype 4b (strain CLIP80459) protein is Ribosomal RNA small subunit methyltransferase G.